Reading from the N-terminus, the 461-residue chain is Protein-serine O-palmitoleoyltransferase porcupine (461 aa).

Residues 1-17 (MATFSRQEFFQQLLQGC) lie on the Cytoplasmic side of the membrane. The helical transmembrane segment at 18-38 (LLPTAQQGLDQIWLLLAICLA) threads the bilayer. Residues 39–66 (CRLLWRLGLPSYLKHASTVAGGFFSLYH) lie on the Extracellular side of the membrane. A helical membrane pass occupies residues 67–87 (FFQLHMVWVVLLSLLCYLVLF). Topologically, residues 88-95 (LCRHSSHR) are cytoplasmic. A helical membrane pass occupies residues 96 to 116 (GVFLSVTILIYLLMGEMHMVD). At 117 to 152 (TVTWHKMRGAQMIVAMKAVSLGFDLDRGEVGTVPSP) the chain is on the extracellular side. A helical membrane pass occupies residues 153–173 (VEFMGYLYFVGTIVFGPWISF). Residues 174-198 (HSYLQAVQGRPLSCRWLQKVARSLA) are Cytoplasmic-facing. Cys187 carries the S-palmitoyl cysteine lipid modification. A helical membrane pass occupies residues 199–219 (LALLCLVLSTCVGPYLFPYFI). The Extracellular portion of the chain corresponds to 220 to 252 (PLNGDRLLRNKKRKARGTMVRWLRAYESAVSFH). The chain crosses the membrane as a helical span at residues 253 to 273 (FSNYFVGFLSEATATLAGAGF). Topologically, residues 274–337 (TEEKDHLEWD…SAVLVTYAAS (64 aa)) are cytoplasmic. A helical transmembrane segment spans residues 338–358 (ALLHGFSFHLAAVLLSLAFIT). His341 is a catalytic residue. The Extracellular segment spans residues 359–396 (YVEHVLRKRLARILSACVLSKRCPPDCSHQHRLGLGVR). The helical transmembrane segment at 397–417 (ALNLLFGALAIFHLAYLGSLF) threads the bilayer. The Cytoplasmic segment spans residues 418 to 461 (DVDVDDTTEEQGYGMAYTVHKWSELSWASHWVTFGCWIFYRLIG).

Belongs to the membrane-bound acyltransferase family. Porcupine subfamily. As to quaternary structure, interacts with WNT1, WNT3, WNT3A, WNT4, WNT5A, WNT5B, WNT6, WNT7A and WNT7B. Isoform 1 is expressed in fetal brain, brain, amygdala, caudate nucleus, cerebellum, hippocampus, pituitary, thalamus, heart, skeletal muscle and testis. Isoform 4 is expressed in amygdala, corpus callosum, hippocampus, spinal cord, kidney, liver, lung, spleen, uterus, testis. Isoform 2 and isoform 3 are expressed in substantia negra, spinal cord, heart and lung.

Its subcellular location is the endoplasmic reticulum membrane. The enzyme catalyses [Wnt protein]-L-serine + (9Z)-hexadecenoyl-CoA = [Wnt protein]-O-(9Z)-hexadecenoyl-L-serine + CoA. Functionally, protein-serine O-palmitoleoyltransferase that acts as a key regulator of the Wnt signaling pathway by mediating the attachment of palmitoleate, a 16-carbon monounsaturated fatty acid (C16:1(9Z)), to Wnt proteins. Serine palmitoleoylation of WNT proteins is required for efficient binding to frizzled receptors. The polypeptide is Protein-serine O-palmitoleoyltransferase porcupine (Homo sapiens (Human)).